Here is a 443-residue protein sequence, read N- to C-terminus: Xaa-Pro dipeptidase (443 aa).

Mn(2+)-binding residues include aspartate 246, aspartate 257, histidine 339, glutamate 384, and glutamate 423.

This sequence belongs to the peptidase M24B family. Bacterial-type prolidase subfamily. Requires Mn(2+) as cofactor.

It catalyses the reaction Xaa-L-Pro dipeptide + H2O = an L-alpha-amino acid + L-proline. Splits dipeptides with a prolyl residue in the C-terminal position. The sequence is that of Xaa-Pro dipeptidase from Erwinia tasmaniensis (strain DSM 17950 / CFBP 7177 / CIP 109463 / NCPPB 4357 / Et1/99).